We begin with the raw amino-acid sequence, 331 residues long: D-galactose/methyl-galactoside binding periplasmic protein MglB (331 aa).

A signal peptide spans 1-24 (MKKTAVLSTVAFAIALGSASASFA). Beta-D-galactose-binding residues include Asp38 and Asn115. 2 residues coordinate beta-D-glucose: Asp38 and Asn115. Asp158, Asn160, Asp162, Lys164, and Gln166 together coordinate Ca(2+). Residues His176, Asp178, and Arg182 each coordinate beta-D-galactose. The beta-D-glucose site is built by His176, Asp178, and Arg182. Glu229 lines the Ca(2+) pocket. 3 residues coordinate beta-D-galactose: Asn235, Asp259, and Asn279. Residues Asn235, Asp259, and Asn279 each contribute to the beta-D-glucose site.

Belongs to the bacterial solute-binding protein 2 family. The ABC transporter complex is composed of one ATP-binding protein (MglA), two transmembrane proteins (MglC) and a solute-binding protein (MglB).

It localises to the periplasm. Functionally, part of the ABC transporter complex MglABC involved in galactose/methyl galactoside import. This is D-galactose/methyl-galactoside binding periplasmic protein MglB (mglB) from Haemophilus influenzae (strain ATCC 51907 / DSM 11121 / KW20 / Rd).